The primary structure comprises 212 residues: ER lumen protein-retaining receptor 1 (212 aa).

At 1 to 4 the chain is on the lumenal side; the sequence is MNLF. Residues 5–24 traverse the membrane as a helical segment; that stretch reads RFLGDLSHLLAIILLLLKIW. Over 25–32 the chain is Cytoplasmic; it reads KSRSCAGI. The helical transmembrane segment at 33 to 52 threads the bilayer; it reads SGKSQVLFAVVFTARYLDLF. Positions 47 to 48 are interaction with the K-D-E-L motif on target proteins; the sequence is RY. At 53 to 58 the chain is on the lumenal side; that stretch reads TNYISL. The chain crosses the membrane as a helical span at residues 59–79; it reads YNTCMKVVYIACSFTTVWMIY. At 80–92 the chain is on the cytoplasmic side; it reads SKFKATYDGNHDT. The chain crosses the membrane as a helical span at residues 93-110; that stretch reads FRVEFLVIPTAILAFLVN. The Lumenal segment spans residues 111 to 116; the sequence is HDFTPL. A helical transmembrane segment spans residues 117-135; sequence EILWTFSIYLESVAILPQL. The Cytoplasmic segment spans residues 136 to 149; sequence FMVSKTGEAETITS. The helical transmembrane segment at 150-168 threads the bilayer; sequence HYLFALGVYRTLYLFNWIW. Residues 159–169 form an interaction with the K-D-E-L motif on target proteins region; sequence RTLYLFNWIWR. At 169-178 the chain is on the lumenal side; it reads RYHFEGFFDL. A helical transmembrane segment spans residues 179-199; it reads IAIVAGLVQTVLYCDFFYLYI. At 200-212 the chain is on the cytoplasmic side; the sequence is TKVLKGKKLSLPA. An important for recycling of cargo proteins with the sequence motif K-D-E-L from the Golgi to the endoplasmic reticulum region spans residues 204-207; the sequence is KGKK. A Phosphoserine; by PKA modification is found at Ser209.

Belongs to the ERD2 family. In terms of assembly, upon ligand binding the receptor oligomerizes and interacts with components of the transport machinery such as ARFGAP1 and ARF1. Phosphorylation by PKA at Ser-209 is required for endoplasmic reticulum retention function.

It localises to the golgi apparatus membrane. It is found in the cytoplasmic vesicle. The protein resides in the COPI-coated vesicle membrane. The protein localises to the endoplasmic reticulum membrane. Its subcellular location is the endoplasmic reticulum-Golgi intermediate compartment membrane. Functionally, receptor for the C-terminal sequence motif K-D-E-L that is present on endoplasmic reticulum resident proteins and that mediates their recycling from the Golgi back to the endoplasmic reticulum. The chain is ER lumen protein-retaining receptor 1 (KDELR1) from Bos taurus (Bovine).